A 231-amino-acid polypeptide reads, in one-letter code: ATP phosphoribosyltransferase (231 aa).

The protein belongs to the ATP phosphoribosyltransferase family. Short subfamily. Heteromultimer composed of HisG and HisZ subunits.

The protein resides in the cytoplasm. The enzyme catalyses 1-(5-phospho-beta-D-ribosyl)-ATP + diphosphate = 5-phospho-alpha-D-ribose 1-diphosphate + ATP. It participates in amino-acid biosynthesis; L-histidine biosynthesis; L-histidine from 5-phospho-alpha-D-ribose 1-diphosphate: step 1/9. Functionally, catalyzes the condensation of ATP and 5-phosphoribose 1-diphosphate to form N'-(5'-phosphoribosyl)-ATP (PR-ATP). Has a crucial role in the pathway because the rate of histidine biosynthesis seems to be controlled primarily by regulation of HisG enzymatic activity. The chain is ATP phosphoribosyltransferase from Brucella anthropi (strain ATCC 49188 / DSM 6882 / CCUG 24695 / JCM 21032 / LMG 3331 / NBRC 15819 / NCTC 12168 / Alc 37) (Ochrobactrum anthropi).